We begin with the raw amino-acid sequence, 352 residues long: Ferrochelatase (352 aa).

2 residues coordinate Fe cation: His-222 and Glu-303.

It belongs to the ferrochelatase family.

It localises to the cytoplasm. It catalyses the reaction heme b + 2 H(+) = protoporphyrin IX + Fe(2+). The protein operates within porphyrin-containing compound metabolism; protoheme biosynthesis; protoheme from protoporphyrin-IX: step 1/1. Functionally, catalyzes the ferrous insertion into protoporphyrin IX. The polypeptide is Ferrochelatase (Brucella canis (strain ATCC 23365 / NCTC 10854 / RM-666)).